A 177-amino-acid chain; its full sequence is Peptidyl-tRNA hydrolase (177 aa).

Position 18 (tyrosine 18) interacts with tRNA. Histidine 23 functions as the Proton acceptor in the catalytic mechanism. The tRNA site is built by phenylalanine 65, asparagine 67, and asparagine 113.

The protein belongs to the PTH family. Monomer.

It is found in the cytoplasm. It catalyses the reaction an N-acyl-L-alpha-aminoacyl-tRNA + H2O = an N-acyl-L-amino acid + a tRNA + H(+). Its function is as follows. Hydrolyzes ribosome-free peptidyl-tRNAs (with 1 or more amino acids incorporated), which drop off the ribosome during protein synthesis, or as a result of ribosome stalling. In terms of biological role, catalyzes the release of premature peptidyl moieties from peptidyl-tRNA molecules trapped in stalled 50S ribosomal subunits, and thus maintains levels of free tRNAs and 50S ribosomes. The protein is Peptidyl-tRNA hydrolase of Corynebacterium efficiens (strain DSM 44549 / YS-314 / AJ 12310 / JCM 11189 / NBRC 100395).